The primary structure comprises 335 residues: Probable cytosolic iron-sulfur protein assembly protein Ciao1 (335 aa).

WD repeat units lie at residues 12-51 (GHKGRIWGVAWHPKGNVFASCGEDKAIRIWSLTGSTWSTK), 57-96 (GHKRTIREIRWSPCGQYLASASFDATTAIWSKSSGEFECN), 101-140 (GHENEVKSVSWSRSGGLLATCSRDKSVWIWEVAGDDEFEC), 146-185 (SHTQDVKRVVWHPTKEVLASASYDNTIKMYAEDPVDNDWD), 192-231 (SHTSTIWGIDFDADGERLVSCSDDTTIKIWKAYHPGNSAG), 250-289 (QHSRAIYDVSWCKLTGLIATACGDDGIRIFKETSDSKPDE), and 301-335 (AHDQDVNSVQWNPVVAGQLISCSDDGTIKIWKVTE).

It belongs to the WD repeat CIA1 family.

Essential component of the cytosolic iron-sulfur (Fe/S) protein assembly machinery. Required for the maturation of extramitochondrial Fe/S proteins. This is Probable cytosolic iron-sulfur protein assembly protein Ciao1 from Drosophila erecta (Fruit fly).